The primary structure comprises 598 residues: Protein HIGH CHLOROPHYLL FLUORESCENCE PHENOTYPE 173, chloroplastic (598 aa).

The transit peptide at 1-79 (MVGSIVGSNM…ITTKESEETV (79 aa)) directs the protein to the chloroplast. Positions 42–106 (VIPRAQSSSS…PTLKLDDVNP (65 aa)) are disordered. The span at 73–84 (KESEETVAKKLD) shows a compositional bias: basic and acidic residues. The span at 87-97 (PPSPQSPPSPP) shows a compositional bias: pro residues.

The protein belongs to the NmrA-type oxidoreductase family. As to quaternary structure, component of a high molecular weight complex containing psbA mRNA, OHP1, OHP2 and HCF244, and PSII core proteins D1/D2, HCF136 and HCF173. Interacts with LPE1.

The protein localises to the plastid. It localises to the chloroplast membrane. The protein resides in the chloroplast thylakoid membrane. Its subcellular location is the chloroplast stroma. In terms of biological role, auxiliary factor required, together with HCF244, for the biogenesis of photosystem II (PSII), especially for the synthesis of the reaction center proteins (e.g. D1), via the regulation of the corresponding mRNA (e.g. psbA) translation initiation (ribosomal loading) and stabilization. The chain is Protein HIGH CHLOROPHYLL FLUORESCENCE PHENOTYPE 173, chloroplastic from Arabidopsis thaliana (Mouse-ear cress).